The following is a 304-amino-acid chain: Phosphatidylserine decarboxylase proenzyme (304 aa).

Catalysis depends on charge relay system; for autoendoproteolytic cleavage activity residues aspartate 90, histidine 147, and serine 253. Residue serine 253 is the Schiff-base intermediate with substrate; via pyruvic acid; for decarboxylase activity of the active site. Serine 253 carries the pyruvic acid (Ser); by autocatalysis modification.

Belongs to the phosphatidylserine decarboxylase family. PSD-B subfamily. Prokaryotic type I sub-subfamily. In terms of assembly, heterodimer of a large membrane-associated beta subunit and a small pyruvoyl-containing alpha subunit. Pyruvate is required as a cofactor. Post-translationally, is synthesized initially as an inactive proenzyme. Formation of the active enzyme involves a self-maturation process in which the active site pyruvoyl group is generated from an internal serine residue via an autocatalytic post-translational modification. Two non-identical subunits are generated from the proenzyme in this reaction, and the pyruvate is formed at the N-terminus of the alpha chain, which is derived from the carboxyl end of the proenzyme. The autoendoproteolytic cleavage occurs by a canonical serine protease mechanism, in which the side chain hydroxyl group of the serine supplies its oxygen atom to form the C-terminus of the beta chain, while the remainder of the serine residue undergoes an oxidative deamination to produce ammonia and the pyruvoyl prosthetic group on the alpha chain. During this reaction, the Ser that is part of the protease active site of the proenzyme becomes the pyruvoyl prosthetic group, which constitutes an essential element of the active site of the mature decarboxylase.

The protein localises to the cell membrane. The enzyme catalyses a 1,2-diacyl-sn-glycero-3-phospho-L-serine + H(+) = a 1,2-diacyl-sn-glycero-3-phosphoethanolamine + CO2. The protein operates within phospholipid metabolism; phosphatidylethanolamine biosynthesis; phosphatidylethanolamine from CDP-diacylglycerol: step 2/2. In terms of biological role, catalyzes the formation of phosphatidylethanolamine (PtdEtn) from phosphatidylserine (PtdSer). The polypeptide is Phosphatidylserine decarboxylase proenzyme (Dickeya dadantii (strain 3937) (Erwinia chrysanthemi (strain 3937))).